We begin with the raw amino-acid sequence, 366 residues long: Flagellar P-ring protein (366 aa).

Positions 1–20 are cleaved as a signal peptide; it reads MVIKFLSALILLLVTTAAQA.

The protein belongs to the FlgI family. As to quaternary structure, the basal body constitutes a major portion of the flagellar organelle and consists of four rings (L,P,S, and M) mounted on a central rod.

The protein localises to the periplasm. It localises to the bacterial flagellum basal body. In terms of biological role, assembles around the rod to form the L-ring and probably protects the motor/basal body from shearing forces during rotation. In Escherichia coli (strain SE11), this protein is Flagellar P-ring protein.